The primary structure comprises 258 residues: NAD(P)H-hydrate epimerase (258 aa).

Positions 15–244 (AFQLDQELMS…RIAKEYGIED (230 aa)) constitute a YjeF N-terminal domain. Position 75–79 (75–79 (NNGGD)) interacts with (6S)-NADPHX. Positions 76 and 145 each coordinate K(+). (6S)-NADPHX contacts are provided by residues 149-155 (GFSFKPP) and Asp-181. Residue Ser-184 participates in K(+) binding.

This sequence belongs to the NnrE/AIBP family. The cofactor is K(+).

The protein localises to the cytoplasm. It is found in the mitochondrion. The enzyme catalyses (6R)-NADHX = (6S)-NADHX. It catalyses the reaction (6R)-NADPHX = (6S)-NADPHX. In terms of biological role, catalyzes the epimerization of the S- and R-forms of NAD(P)HX, a damaged form of NAD(P)H that is a result of enzymatic or heat-dependent hydration. This is a prerequisite for the S-specific NAD(P)H-hydrate dehydratase to allow the repair of both epimers of NAD(P)HX. This chain is NAD(P)H-hydrate epimerase, found in Candida albicans (strain WO-1) (Yeast).